Reading from the N-terminus, the 319-residue chain is Ankyrin repeat domain-containing protein 1 (319 aa).

A coiled-coil region spans residues 61 to 89 (KSEKQREAELKKKKLEQRSKLENLEDLEI). ANK repeat units follow at residues 152 to 181 (YKRT…QIEF), 185 to 214 (LEST…KISA), 218 to 247 (LLST…DLNA), 251 to 280 (EGDT…DLNI), and 284 to 315 (AGKT…KTSR).

Interacts with YBX1. Interacts with TTN/titin. Mainly expressed in activated vascular endothelial cells. To a lower extent, also expressed in hepatoma cells.

Its subcellular location is the nucleus. May play an important role in endothelial cell activation. May act as a nuclear transcription factor that negatively regulates the expression of cardiac genes. Induction seems to be correlated with apoptotic cell death in hepatoma cells. The chain is Ankyrin repeat domain-containing protein 1 (ANKRD1) from Homo sapiens (Human).